Consider the following 283-residue polypeptide: Cyclin-C (283 aa).

The Cyclin N-terminal domain maps to 46–144; the sequence is NVIQALGEHL…VLECEFYLLE (99 aa). Residues 252–283 form a disordered region; sequence TILSKMPKPKPPPNSEGEQGPNGSQNSSYSQS. Over residues 272–283 the composition is skewed to polar residues; sequence PNGSQNSSYSQS. Position 275 is a phosphoserine (serine 275).

Belongs to the cyclin family. Cyclin C subfamily. As to quaternary structure, component of the Mediator complex, which is composed of MED1, MED4, MED6, MED7, MED8, MED9, MED10, MED11, MED12, MED13, MED13L, MED14, MED15, MED16, MED17, MED18, MED19, MED20, MED21, MED22, MED23, MED24, MED25, MED26, MED27, MED29, MED30, MED31, CCNC, CDK8 and CDC2L6/CDK11. The MED12, MED13, CCNC and CDK8 subunits form a distinct module termed the CDK8 module. Mediator containing the CDK8 module is less active than Mediator lacking this module in supporting transcriptional activation. Individual preparations of the Mediator complex lacking one or more distinct subunits have been variously termed ARC, CRSP, DRIP, PC2, SMCC and TRAP. The cylin/CDK pair formed by CCNC/CDK8 also associates with the large subunit of RNA polymerase II.

The protein localises to the nucleus. Functionally, component of the Mediator complex, a coactivator involved in regulated gene transcription of nearly all RNA polymerase II-dependent genes. Mediator functions as a bridge to convey information from gene-specific regulatory proteins to the basal RNA polymerase II transcription machinery. Mediator is recruited to promoters by direct interactions with regulatory proteins and serves as a scaffold for the assembly of a functional preinitiation complex with RNA polymerase II and the general transcription factors. Binds to and activates cyclin-dependent kinase CDK8 that phosphorylates the CTD (C-terminal domain) of the large subunit of RNA polymerase II (RNAp II), which may inhibit the formation of a transcription initiation complex. This Bos taurus (Bovine) protein is Cyclin-C (CCNC).